A 927-amino-acid polypeptide reads, in one-letter code: Roc-COR-CHAT protease (927 aa).

LRR repeat units lie at residues 38–61, 83–107, 109–125, and 127–151; these read AGQV…TEAQ, LPHL…GFRS, QQVY…VFEG, and CPAL…GFRA. The LRR 5 stretch occupies residues 152 to 170; it reads LKYIYATNNVLQKITFNRS. LRR repeat units lie at residues 171–194 and 195–217; these read MRLL…LSEI and ETME…IWDR. A COR domain is found at 436–623; it reads EWLGVKEDLN…ELRWKKGVVL (188 aa). Active-site residues include histidine 796 and cysteine 840.

Functionally, a dedicated protease for gasdermin bGSDM; cleaves the bGSDM precursor, releasing the pore-forming moiety, which integrates into the membrane and triggers cell death. Probably involved in defense against bacteriophages. Expression of bGSDM and this neighboring protease is highly toxic in E.coli. Cells expressing the gene pair stop dividing and lose membrane integrity. Both proteins are required to kill E.coli. The bGSDM recognition site is larger than the 8 residues surrounding the cleavage site; replacement of the endogenous recognition site by the Runella site (NRVLGENM) in a number of other bGSDMs is not sufficient for them to be cleaved. This is Roc-COR-CHAT protease from Runella zeae (strain ATCC BAA-293 / DSM 19591 / LMG 21438 / NS12).